A 681-amino-acid chain; its full sequence is Methionine--tRNA ligase (681 aa).

The short motif at 14 to 24 (PYANGSIHLGH) is the 'HIGH' region element. Positions 145, 148, 158, and 161 each coordinate Zn(2+). The 'KMSKS' region motif lies at 331–335 (KMSKS). An ATP-binding site is contributed by K334. The 103-residue stretch at 579-681 (AFAAIDLRVA…SGAKPGQRIK (103 aa)) folds into the tRNA-binding domain.

It belongs to the class-I aminoacyl-tRNA synthetase family. MetG type 1 subfamily. Homodimer. It depends on Zn(2+) as a cofactor.

Its subcellular location is the cytoplasm. The catalysed reaction is tRNA(Met) + L-methionine + ATP = L-methionyl-tRNA(Met) + AMP + diphosphate. Its function is as follows. Is required not only for elongation of protein synthesis but also for the initiation of all mRNA translation through initiator tRNA(fMet) aminoacylation. This is Methionine--tRNA ligase from Pseudomonas fluorescens (strain ATCC BAA-477 / NRRL B-23932 / Pf-5).